Here is a 108-residue protein sequence, read N- to C-terminus: UPF0060 membrane protein sll0793 (108 aa).

A run of 4 helical transmembrane segments spans residues 7–27, 32–52, 64–84, and 86–106; these read LYFV…WLWI, SVWL…VATL, YGGI…NVVV, and RLDW…MYAN.

The protein belongs to the UPF0060 family.

The protein localises to the cell inner membrane. The chain is UPF0060 membrane protein sll0793 from Synechocystis sp. (strain ATCC 27184 / PCC 6803 / Kazusa).